The sequence spans 382 residues: uncharacterized protein (382 aa).

A run of 12 helical transmembrane segments spans residues 14-34 (GLLL…LWLA), 45-65 (VVSS…GYVI), 79-99 (FIFA…SWLA), 102-122 (FVAG…LMCS), 131-151 (LLAA…LLVS), 157-177 (LMSV…PLLF), 204-224 (LGVN…GLMP), 235-255 (ASIG…QWPI), 270-290 (VQVF…AMAP), 291-311 (ALFI…AWAC), 325-345 (ALLL…AMLM), and 348-368 (FSDN…LLML).

This sequence belongs to the major facilitator superfamily. YcaD (TC 2.A.1.26) family.

The protein localises to the cell inner membrane. This is an uncharacterized protein from Escherichia coli O7:K1 (strain IAI39 / ExPEC).